Consider the following 267-residue polypeptide: Chlorophyll a-b binding protein 3A, chloroplastic (267 aa).

A chloroplast-targeting transit peptide spans 1–34; sequence MAASTMALSSSTFAGKTVKLAPSSSEITGNGRIT. Residues 153–173 form a helical membrane-spanning segment; sequence LVHAQSILAIWACQVVLMGAV. Positions 154, 158, 166, 174, 177, and 183 each coordinate chlorophyll b. Chlorophyll a is bound by residues lysine 214, glutamate 215, asparagine 218, arginine 220, glutamine 232, histidine 247, and alanine 256. The chain crosses the membrane as a helical span at residues 221 to 241; the sequence is LAMFSMFGFFVQAIVTGKGPL. Phenylalanine 263 lines the chlorophyll b pocket.

This sequence belongs to the light-harvesting chlorophyll a/b-binding (LHC) protein family. In terms of assembly, the LHC complex consists of chlorophyll a-b binding proteins. It depends on Binds at least 14 chlorophylls (8 Chl-a and 6 Chl-b) and carotenoids such as lutein and neoxanthin. as a cofactor. In terms of processing, photoregulated by reversible phosphorylation of its threonine residues.

It is found in the plastid. The protein localises to the chloroplast thylakoid membrane. Its function is as follows. The light-harvesting complex (LHC) functions as a light receptor, it captures and delivers excitation energy to photosystems with which it is closely associated. This chain is Chlorophyll a-b binding protein 3A, chloroplastic (CAB3A), found in Solanum lycopersicum (Tomato).